The primary structure comprises 1389 residues: DNA-directed RNA polymerase subunit beta' (1389 aa).

Zn(2+) contacts are provided by C73, C75, C88, and C91. 3 residues coordinate Mg(2+): D464, D466, and D468. The Zn(2+) site is built by C810, C884, C891, and C894.

This sequence belongs to the RNA polymerase beta' chain family. The RNAP catalytic core consists of 2 alpha, 1 beta, 1 beta' and 1 omega subunit. When a sigma factor is associated with the core the holoenzyme is formed, which can initiate transcription. It depends on Mg(2+) as a cofactor. The cofactor is Zn(2+).

It carries out the reaction RNA(n) + a ribonucleoside 5'-triphosphate = RNA(n+1) + diphosphate. Its function is as follows. DNA-dependent RNA polymerase catalyzes the transcription of DNA into RNA using the four ribonucleoside triphosphates as substrates. The chain is DNA-directed RNA polymerase subunit beta' from Pelagibacter ubique (strain HTCC1062).